The primary structure comprises 429 residues: Enolase (429 aa).

Glutamine 168 is a (2R)-2-phosphoglycerate binding site. Glutamate 210 (proton donor) is an active-site residue. 3 residues coordinate Mg(2+): aspartate 247, glutamate 288, and aspartate 315. 4 residues coordinate (2R)-2-phosphoglycerate: lysine 340, arginine 369, serine 370, and lysine 391. Lysine 340 acts as the Proton acceptor in catalysis.

Belongs to the enolase family. Mg(2+) serves as cofactor.

Its subcellular location is the cytoplasm. It localises to the secreted. The protein resides in the cell surface. It carries out the reaction (2R)-2-phosphoglycerate = phosphoenolpyruvate + H2O. It functions in the pathway carbohydrate degradation; glycolysis; pyruvate from D-glyceraldehyde 3-phosphate: step 4/5. Catalyzes the reversible conversion of 2-phosphoglycerate (2-PG) into phosphoenolpyruvate (PEP). It is essential for the degradation of carbohydrates via glycolysis. This is Enolase from Nostoc punctiforme (strain ATCC 29133 / PCC 73102).